The chain runs to 1438 residues: DNA polymerase III PolC-type (1438 aa).

The Exonuclease domain maps to 422–578 (YVVFDVETTG…YDTEATAYMF (157 aa)).

This sequence belongs to the DNA polymerase type-C family. PolC subfamily.

The protein localises to the cytoplasm. The catalysed reaction is DNA(n) + a 2'-deoxyribonucleoside 5'-triphosphate = DNA(n+1) + diphosphate. Required for replicative DNA synthesis. This DNA polymerase also exhibits 3' to 5' exonuclease activity. The protein is DNA polymerase III PolC-type of Staphylococcus saprophyticus subsp. saprophyticus (strain ATCC 15305 / DSM 20229 / NCIMB 8711 / NCTC 7292 / S-41).